Here is a 387-residue protein sequence, read N- to C-terminus: WD repeat-containing protein 89 (387 aa).

WD repeat units follow at residues 21–65 (KEPT…VLRE), 68–107 (GYPG…EKPV), 112–156 (GYPS…QNLS), 168–208 (THSD…EEDA), 214–254 (NSIS…TDEP), and 319–358 (GHAA…KTFT).

This chain is WD repeat-containing protein 89 (WDR89), found in Homo sapiens (Human).